The chain runs to 116 residues: Large ribosomal subunit protein bL17 (116 aa).

This sequence belongs to the bacterial ribosomal protein bL17 family. As to quaternary structure, part of the 50S ribosomal subunit. Contacts protein L32.

This chain is Large ribosomal subunit protein bL17, found in Thermosynechococcus vestitus (strain NIES-2133 / IAM M-273 / BP-1).